The following is a 49-amino-acid chain: Heme exporter protein C (49 aa).

This sequence belongs to the CcmC/CycZ/HelC family.

The protein resides in the cell inner membrane. Required for the export of heme to the periplasm for the biogenesis of c-type cytochromes. This chain is Heme exporter protein C, found in Rhizobium leguminosarum bv. viciae.